Reading from the N-terminus, the 416-residue chain is Exodeoxyribonuclease 7 large subunit (416 aa).

The protein belongs to the XseA family. Heterooligomer composed of large and small subunits.

Its subcellular location is the cytoplasm. It catalyses the reaction Exonucleolytic cleavage in either 5'- to 3'- or 3'- to 5'-direction to yield nucleoside 5'-phosphates.. Its function is as follows. Bidirectionally degrades single-stranded DNA into large acid-insoluble oligonucleotides, which are then degraded further into small acid-soluble oligonucleotides. This is Exodeoxyribonuclease 7 large subunit from Nitratiruptor sp. (strain SB155-2).